A 255-amino-acid chain; its full sequence is MRHPLVMGNWKLNGSRHMVNELVANLRKELAGVAGCDVAIAPPEMYIDLAKRAAAGSHIMLGAQNVDLNLSGAFTGETSAEMLKDIGAQYIIIGHSERRTYHKESDELIAKKFAVLKEQGLTPVLCIGETEAENEAGKTEEVCARQIDAVLKTQGAAAFEGAVIAYEPVWAIGTGKSATPAQAQAVHKFIRDHIAKADAKIAEQVIIQYGGSVNASNAAELFAQPDIDGALVGGASLKADAFAVIVKAAEAAKQA.

9–11 (NWK) contacts substrate. The active-site Electrophile is the His-95. The active-site Proton acceptor is the Glu-167. Residues Gly-173, Ser-212, and 233-234 (GG) contribute to the substrate site.

This sequence belongs to the triosephosphate isomerase family. Homodimer.

Its subcellular location is the cytoplasm. The catalysed reaction is D-glyceraldehyde 3-phosphate = dihydroxyacetone phosphate. It participates in carbohydrate biosynthesis; gluconeogenesis. It functions in the pathway carbohydrate degradation; glycolysis; D-glyceraldehyde 3-phosphate from glycerone phosphate: step 1/1. In terms of biological role, involved in the gluconeogenesis. Catalyzes stereospecifically the conversion of dihydroxyacetone phosphate (DHAP) to D-glyceraldehyde-3-phosphate (G3P). This Salmonella dublin (strain CT_02021853) protein is Triosephosphate isomerase.